The sequence spans 257 residues: tRNA pseudouridine synthase A (257 aa).

The active-site Nucleophile is aspartate 43. Position 94 (tyrosine 94) interacts with substrate.

It belongs to the tRNA pseudouridine synthase TruA family.

The enzyme catalyses uridine(38/39/40) in tRNA = pseudouridine(38/39/40) in tRNA. In terms of biological role, formation of pseudouridine at positions 38, 39 and 40 in the anticodon stem and loop of transfer RNAs. The chain is tRNA pseudouridine synthase A from Pyrobaculum calidifontis (strain DSM 21063 / JCM 11548 / VA1).